Consider the following 269-residue polypeptide: Tryptophan synthase alpha chain (269 aa).

Residues Glu-49 and Asp-60 each act as proton acceptor in the active site.

This sequence belongs to the TrpA family. Tetramer of two alpha and two beta chains.

It carries out the reaction (1S,2R)-1-C-(indol-3-yl)glycerol 3-phosphate + L-serine = D-glyceraldehyde 3-phosphate + L-tryptophan + H2O. It participates in amino-acid biosynthesis; L-tryptophan biosynthesis; L-tryptophan from chorismate: step 5/5. The alpha subunit is responsible for the aldol cleavage of indoleglycerol phosphate to indole and glyceraldehyde 3-phosphate. This chain is Tryptophan synthase alpha chain, found in Azotobacter vinelandii (strain DJ / ATCC BAA-1303).